The following is a 127-amino-acid chain: Protein translocase subunit SecE (127 aa).

3 consecutive transmembrane segments (helical) span residues 17–37 (VKWI…MCFY), 41–61 (LFIR…TMIY), and 95–115 (FIVI…DSVI).

It belongs to the SecE/SEC61-gamma family. In terms of assembly, component of the Sec protein translocase complex. Heterotrimer consisting of SecY, SecE and SecG subunits. The heterotrimers can form oligomers, although 1 heterotrimer is thought to be able to translocate proteins. Interacts with the ribosome. Interacts with SecDF, and other proteins may be involved. Interacts with SecA.

It localises to the cell inner membrane. Its function is as follows. Essential subunit of the Sec protein translocation channel SecYEG. Clamps together the 2 halves of SecY. May contact the channel plug during translocation. The chain is Protein translocase subunit SecE from Buchnera aphidicola subsp. Acyrthosiphon pisum (strain APS) (Acyrthosiphon pisum symbiotic bacterium).